A 420-amino-acid chain; its full sequence is UDP-N-acetylglucosamine 1-carboxyvinyltransferase (420 aa).

Position 22-23 (22-23) interacts with phosphoenolpyruvate; that stretch reads KN. Position 93 (Arg-93) interacts with UDP-N-acetyl-alpha-D-glucosamine. The active-site Proton donor is the Cys-117. Cys-117 carries the post-translational modification 2-(S-cysteinyl)pyruvic acid O-phosphothioketal. UDP-N-acetyl-alpha-D-glucosamine-binding residues include Asp-307 and Ile-329.

It belongs to the EPSP synthase family. MurA subfamily.

The protein resides in the cytoplasm. It catalyses the reaction phosphoenolpyruvate + UDP-N-acetyl-alpha-D-glucosamine = UDP-N-acetyl-3-O-(1-carboxyvinyl)-alpha-D-glucosamine + phosphate. The protein operates within cell wall biogenesis; peptidoglycan biosynthesis. Cell wall formation. Adds enolpyruvyl to UDP-N-acetylglucosamine. The sequence is that of UDP-N-acetylglucosamine 1-carboxyvinyltransferase from Shewanella halifaxensis (strain HAW-EB4).